The following is a 627-amino-acid chain: Pentatricopeptide repeat-containing protein At2g35030, mitochondrial (627 aa).

The transit peptide at 1 to 44 directs the protein to the mitochondrion; it reads MQSRALSRLRSYYKRSSVFPSSDNDRSVQLFNLVRSIYSSSSRP. PPR repeat units follow at residues 45–75, 76–110, 111–138, 139–173, 174–200, 201–235, 236–262, 263–293, 294–328, 330–360, 365–396, 398–432, 433–467, and 469–499; these read RVPQ…LPER, DVVT…KNVV, TWTA…MPER, NVVS…NIVS, WNSM…MPRR, DVVS…NIIS, WNAM…MPER, DFAS…MPEK, NVIS…GSVK, NVGT…ISKS, NEIV…LVCQ, DLIS…GFKP, SAVT…ESLP, and REEH…DDAR. Residues 504 to 579 form a type E motif region; sequence FYGAILSACN…QPGCSWVKVG (76 aa). The tract at residues 580–610 is type E(+) motif; the sequence is KQNHLFVVGDKSHPQFEALDSILSDLRNKMR.

This sequence belongs to the PPR family. PCMP-E subfamily.

The protein resides in the mitochondrion. The chain is Pentatricopeptide repeat-containing protein At2g35030, mitochondrial (PCMP-E15) from Arabidopsis thaliana (Mouse-ear cress).